Consider the following 143-residue polypeptide: Small ribosomal subunit protein uS9A (143 aa).

An N-acetylserine modification is found at S2. Residue K30 forms a Glycyl lysine isopeptide (Lys-Gly) (interchain with G-Cter in ubiquitin) linkage. Phosphoserine is present on S34. Glycyl lysine isopeptide (Lys-Gly) (interchain with G-Cter in ubiquitin) cross-links involve residues K47 and K59. At S61 the chain carries Phosphoserine. A Phosphothreonine modification is found at T70. S76 is subject to Phosphoserine. The disordered stretch occupies residues R123–R143. Residues A134–R143 are compositionally biased toward basic residues.

It belongs to the universal ribosomal protein uS9 family. Component of the small ribosomal subunit (SSU). Mature yeast ribosomes consist of a small (40S) and a large (60S) subunit. The 40S small subunit contains 1 molecule of ribosomal RNA (18S rRNA) and 33 different proteins (encoded by 57 genes). The large 60S subunit contains 3 rRNA molecules (25S, 5.8S and 5S rRNA) and 46 different proteins (encoded by 81 genes).

The protein localises to the cytoplasm. Functionally, component of the ribosome, a large ribonucleoprotein complex responsible for the synthesis of proteins in the cell. The small ribosomal subunit (SSU) binds messenger RNAs (mRNAs) and translates the encoded message by selecting cognate aminoacyl-transfer RNA (tRNA) molecules. The large subunit (LSU) contains the ribosomal catalytic site termed the peptidyl transferase center (PTC), which catalyzes the formation of peptide bonds, thereby polymerizing the amino acids delivered by tRNAs into a polypeptide chain. The nascent polypeptides leave the ribosome through a tunnel in the LSU and interact with protein factors that function in enzymatic processing, targeting, and the membrane insertion of nascent chains at the exit of the ribosomal tunnel. The protein is Small ribosomal subunit protein uS9A of Saccharomyces cerevisiae (strain ATCC 204508 / S288c) (Baker's yeast).